The chain runs to 219 residues: Elongation factor Ts (219 aa).

Positions 81–84 (SDFV) are involved in Mg(2+) ion dislocation from EF-Tu.

It belongs to the EF-Ts family.

The protein localises to the cytoplasm. In terms of biological role, associates with the EF-Tu.GDP complex and induces the exchange of GDP to GTP. It remains bound to the aminoacyl-tRNA.EF-Tu.GTP complex up to the GTP hydrolysis stage on the ribosome. In Koribacter versatilis (strain Ellin345), this protein is Elongation factor Ts.